The sequence spans 588 residues: BTB/POZ domain-containing protein At3g26490 (588 aa).

Positions 28–99 constitute a BTB domain; that stretch reads NDLVIQVKST…CYGITITLCA (72 aa). One can recognise an NPH3 domain in the interval 218 to 507; sequence RWWGEDLAEL…VQILFVEQAR (290 aa). Residues serine 376 and serine 378 each carry the phosphoserine modification. The residue at position 448 (tyrosine 448) is a Phosphotyrosine. A disordered region spans residues 529 to 554; the sequence is FTTRREEGGQEEEERDETKPSGGFLQ.

The protein belongs to the NPH3 family.

It functions in the pathway protein modification; protein ubiquitination. May act as a substrate-specific adapter of an E3 ubiquitin-protein ligase complex (CUL3-RBX1-BTB) which mediates the ubiquitination and subsequent proteasomal degradation of target proteins. The sequence is that of BTB/POZ domain-containing protein At3g26490 from Arabidopsis thaliana (Mouse-ear cress).